A 258-amino-acid polypeptide reads, in one-letter code: Cholera enterotoxin subunit A (258 aa).

The first 18 residues, 1–18 (MVKIIFVFFIFLSSFSYA), serve as a signal peptide directing secretion. NAD(+) is bound by residues 25–28 (RADS) and 41–43 (MPR). Residue Glu130 is part of the active site. Cys205 and Cys217 are joined by a disulfide.

It belongs to the enterotoxin A family. The holotoxin (choleragen) consists of a pentameric ring of B subunits whose central pore is occupied by the A subunit. The A subunit contains two chains, A1 and A2, linked by a disulfide bridge. Interaction with the host protein ARF6 causes a conformation change so that the enterotoxin subunit A1 can bind NAD and catalyze the ADP-ribosylation of the host Gs alpha.

In terms of biological role, the A1 chain catalyzes the ADP-ribosylation of Gs alpha, a GTP-binding regulatory protein, to activate the adenylate cyclase. This leads to an overproduction of cAMP and eventually to a hypersecretion of chloride and bicarbonate followed by water, resulting in the characteristic cholera stool. The A2 chain tethers A1 to the pentameric ring. The sequence is that of Cholera enterotoxin subunit A (ctxA) from Vibrio cholerae serotype O1 (strain ATCC 39315 / El Tor Inaba N16961).